The primary structure comprises 511 residues: Arginine-containing cyclodipeptide synthase eshA (511 aa).

The short motif at 413–417 (DDSAE) is the Conserved DDXXE motif element.

This sequence belongs to the arginine-containing cyclodipeptide synthase family.

It carries out the reaction L-arginyl-tRNA(Arg) + L-leucyl-tRNA(Leu) = cyclo(L-arginyl-L-leucyl) + tRNA(Arg) + tRNA(Leu) + 2 H(+). It participates in secondary metabolite biosynthesis. Arginine-containing cyclodipeptide synthase; part of the cluster that mediates the biosynthesis of a highly modified cyclo-arginine-leucine dipeptide (cRW). Within the pathway, eshA acts as the scaffold-generating enzyme and is responsible for formation of the cyclo-Arg-Leu diketopiperazine (cRL) from L-arginyl-tRNA(Arg) + L-Leucyl-tRNA(Leu). Additional enzymes from the cluster then further modify the cyclo-Arg-Leu diketopiperazine (cRW) scaffold. The protein is Arginine-containing cyclodipeptide synthase eshA of Penicillium shearii (Eupenicillium shearii).